A 392-amino-acid chain; its full sequence is MYIRDLDVRDFRSWPELTLRLKPGITLFVGRNGFGKTNIVEAIGYTAHLSSHRVAHDAPLVRQGAHNARISATAVNQGRELTAHLLIKPHAANQAQINRTRLKSPRELLGVVKTVLFSPEDLSLVRGEPAARRQYLDDIIASRTPRLAGVKADYDKVLKQRNALLKSASPSLRRGYSDSDGASALATLDVWDTQLSSLGAQVIQARLALVDELRELIPAAYAGLAPESRPAAIDYKSTVDISDREVIEAMMLTELATKRQREIERGISLVGPHRDDLVLNLGTSPAKGFASHGETWSYAISLRLAEFNLLRQDGTDPILILDDVFAELDAKRREKLVRLAAGAEQVLITAAVDEDLPGNLQPIERFTVTVRDTDEGRISEIAPYTAGGDEDD.

G30–T37 is an ATP binding site.

The protein belongs to the RecF family.

The protein resides in the cytoplasm. Functionally, the RecF protein is involved in DNA metabolism; it is required for DNA replication and normal SOS inducibility. RecF binds preferentially to single-stranded, linear DNA. It also seems to bind ATP. In Corynebacterium aurimucosum (strain ATCC 700975 / DSM 44827 / CIP 107346 / CN-1) (Corynebacterium nigricans), this protein is DNA replication and repair protein RecF.